A 463-amino-acid chain; its full sequence is ATP-dependent protease ATPase subunit HslU (463 aa).

ATP-binding positions include I19, 61-66, D277, E341, and R413; that span reads GVGKTE.

It belongs to the ClpX chaperone family. HslU subfamily. As to quaternary structure, a double ring-shaped homohexamer of HslV is capped on each side by a ring-shaped HslU homohexamer. The assembly of the HslU/HslV complex is dependent on binding of ATP.

The protein localises to the cytoplasm. ATPase subunit of a proteasome-like degradation complex; this subunit has chaperone activity. The binding of ATP and its subsequent hydrolysis by HslU are essential for unfolding of protein substrates subsequently hydrolyzed by HslV. HslU recognizes the N-terminal part of its protein substrates and unfolds these before they are guided to HslV for hydrolysis. This is ATP-dependent protease ATPase subunit HslU from Bacillus cytotoxicus (strain DSM 22905 / CIP 110041 / 391-98 / NVH 391-98).